The primary structure comprises 427 residues: Adenylosuccinate synthetase (427 aa).

GTP contacts are provided by residues 12-18 (GDEGKGK) and 40-42 (GHT). The Proton acceptor role is filled by D13. Mg(2+) is bound by residues D13 and G40. Residues 13-16 (DEGK), 38-41 (NAGH), T127, R141, Q222, T237, and R301 contribute to the IMP site. The active-site Proton donor is H41. 297–303 (VVTKRPR) lines the substrate pocket. Residues R303, 329-331 (SLD), and 411-413 (AVG) each bind GTP.

The protein belongs to the adenylosuccinate synthetase family. Homodimer. Mg(2+) serves as cofactor.

It is found in the cytoplasm. It catalyses the reaction IMP + L-aspartate + GTP = N(6)-(1,2-dicarboxyethyl)-AMP + GDP + phosphate + 2 H(+). It functions in the pathway purine metabolism; AMP biosynthesis via de novo pathway; AMP from IMP: step 1/2. Functionally, plays an important role in the de novo pathway of purine nucleotide biosynthesis. Catalyzes the first committed step in the biosynthesis of AMP from IMP. In Leuconostoc mesenteroides subsp. mesenteroides (strain ATCC 8293 / DSM 20343 / BCRC 11652 / CCM 1803 / JCM 6124 / NCDO 523 / NBRC 100496 / NCIMB 8023 / NCTC 12954 / NRRL B-1118 / 37Y), this protein is Adenylosuccinate synthetase.